A 130-amino-acid chain; its full sequence is MKRLRNKMTTEELAECLGVAKQTVNRWIREKGWKTEKFPGVKGGRARLILVDTQVCEFIQNTPAFHNTPMLMEAEERIAEYAPGARAPAYRQIINAIDNMTDIEQEKVAQFLSREGIRNFLARLDIDESA.

This is an uncharacterized protein from Escherichia coli (strain K12).